The sequence spans 1574 residues: MLPKEDKVNSNHFKGVNDAHKTSLYKRLSSSVIPPLTFLNQNPASPNNEEVPGNNEANKDEKTFSDDEDIAHPIGSVGSSNNFLSFLYAGMGKLSDLKGNDASNANEAKDSKLNDNLRSSRNEQANEPEYRREYKLDYDIDESEEDDIESTRDENTLKPKTEDTSVHSKLDPEERLENVVNMLFDDHDESTTALASDPSKGTVFQQSVLKNFDPFRIQQTELLKLKDITLSTEEDESEEQKLKKKFFRLKVADKLKRVFELNDDDYFYGNYNVWLVRDVLLQGHIYLTKESILFFTFLPKRHNTISASKGTTGGFQHHDDSHDVIQSGSLGMKTALYGDTVFSTPLTHRFWVILRNETITVYHSPTDLYFPITLIDLKSCVRAEVIEKGRNDNASPRPDLHRNDSQEVSSGDEEVEFSNMLNSNYQLEDNSENVSGGYWFKVVTKKKTHKFHSDSLYSARQWVNNIVKVVFQLHNSNANNEVIMKIPINDVLSFDLNEVFGASEKNSDSNGGEEKPKVLNVKYLENGSKGRYALSASRMKKELKNKTKKKMKKNSGNEPDELLSENTYFLLFKDGDEVFSTLNEIVNENHHSSNIFRNRHNSISKKYTSEKGSNWNRPFTHKDEEIHIPRAISTLTTDHFQNSIIDQIEEASHRNTHTQNTDLASPRSECGLTHSVSTSPQSKIRKFGKTLITPSKIFSNKSRTESEKSTPDRSQTTSPVQGINLSLSGLKDLNMAFEASQKNYEVSCTRYSHTEENSTNSPSNFQNNTLSKADALSPQIKSPQPLEAGPLNLTDPSEYEDNKKKNSTLSSIGKSIKAMSSIRSKLAAVNHYEQLDENDTYFIRDVSAREVDTRHFQERFSFNNKKQLIASYHCHIIRAVPVFGKVYLGDSEICFRSMLPGVSTRMILPLIDVDTCSKEKGSNIAYSGLVLVIRGYDELFMEFSVQSARDDCLAMILRQLEKNRESGNESSDDNKSAQHGKSGCFQKTPSSAETTKSSNEIKLAQWRIENARLKLFEDKINAAAGLHVPIVLEDSPFYKTEIRPSTSFNFTLLTIGSRGDVQPYIALGKGLLNEGHNVTIATHSDFEEWIVGHGIKFKTIAGNPVELMSLMVTHGSMSLSFLKEASSKFRGWIQELLDTSWKACQGSDILIESPSAMVGAHIAEALGIPYIRAFTMPWTRTRAYPHAFIVPDKKKGGSYNYITHLMFETVLWKGISSQVNKWRRESLGLPRTNLYRLAQYDIPFLYNISPTIFPPSVDFPDWVKVTGYWFLDEGAADDFEPSKELVEFMNKARADDKKVVYIGFGSIVVEDAKSLTKAIVEAVLNADVRCILNKGWSDRNSSPAKDNAEPEVELPEEIYNSGSIPHDWLFPKIDAAVHHGGSGTTGATMRAGIPTIIKPFFGDQFFYSSRIEDIGAGIGLKKLNARSLCTALKTATSDAKMITKAKKISERLKQENGVLNAIEAIYYELEYARSLILAKQHENTKHDLKSGTQTPVVNETNEYFDSDTYDADHDSDKESDHDQTYEQDNHSDYDVANDDNMTEIVEPSLEDGNDTVRIAPDSGNDNTTVTDANK.

Residues 37-48 (TFLNQNPASPNN) are compositionally biased toward polar residues. 2 disordered regions span residues 37-61 (TFLN…NKDE) and 102-170 (ASNA…HSKL). 2 stretches are compositionally biased toward basic and acidic residues: residues 107–121 (EAKD…RSSR) and 128–138 (PEYRREYKLDY). Residues 139–148 (DIDESEEDDI) are compositionally biased toward acidic residues. A compositionally biased stretch (basic and acidic residues) spans 149 to 170 (ESTRDENTLKPKTEDTSVHSKL). The region spanning 253–288 (DKLKRVFELNDDDYFYGNYNVWLVRDVLLQGHIYLT) is the GRAM 1 domain. The 149-residue stretch at 323–471 (DVIQSGSLGM…WVNNIVKVVF (149 aa)) folds into the PH domain. Disordered stretches follow at residues 389–413 (GRND…SGDE), 538–559 (RMKK…GNEP), 651–722 (ASHR…PVQG), and 774–806 (DALS…KKKN). A compositionally biased stretch (polar residues) spans 692–701 (ITPSKIFSNK). The span at 702-711 (SRTESEKSTP) shows a compositional bias: basic and acidic residues. A compositionally biased stretch (polar residues) spans 712-722 (DRSQTTSPVQG). The region spanning 854–920 (RHFQERFSFN…IDVDTCSKEK (67 aa)) is the GRAM 2 domain. Residues 964–976 (RESGNESSDDNKS) show a composition bias toward basic and acidic residues. Residues 964–996 (RESGNESSDDNKSAQHGKSGCFQKTPSSAETTK) form a disordered region. The segment covering 985–996 (FQKTPSSAETTK) has biased composition (polar residues). Residues S1057, R1058, D1060, N1333, I1364, H1366, H1379, S1382, G1383, T1384, D1403, and Q1404 each coordinate UDP-alpha-D-glucose. Positions 1505-1574 (DSDTYDADHD…DNTTVTDANK (70 aa)) are disordered. A compositionally biased stretch (basic and acidic residues) spans 1510–1533 (DADHDSDKESDHDQTYEQDNHSDY). The segment covering 1563–1574 (GNDNTTVTDANK) has biased composition (polar residues).

The protein belongs to the glycosyltransferase 28 family.

It localises to the cytoplasm. Its subcellular location is the membrane. It catalyses the reaction a sterol + UDP-alpha-D-glucose = a sterol 3-beta-D-glucoside + UDP + H(+). It carries out the reaction ergosterol + UDP-alpha-D-glucose = ergosteryl 3-beta-D-glucoside + UDP + H(+). Functionally, sterol glycosyltransferase responsible for the glycosylation of ergosterol to form ergosterol-glucoside. The sequence is that of Sterol 3-beta-glucosyltransferase from Debaryomyces hansenii (strain ATCC 36239 / CBS 767 / BCRC 21394 / JCM 1990 / NBRC 0083 / IGC 2968) (Yeast).